The following is a 688-amino-acid chain: Mitochondrial potassium channel ATP-binding subunit (688 aa).

Residues 1–31 (MLFHFLQAGLRQCRPPARLVGLETGLSGARG) constitute a mitochondrion transit peptide. 4 consecutive transmembrane segments (helical) span residues 115 to 135 (PQLI…LLNI), 168 to 188 (LKLL…IVLL), 268 to 288 (GLLL…GSFL), and 342 to 362 (VLGV…NCIV). In terms of domain architecture, ABC transmembrane type-1 spans 121-409 (LTAVLLAFGA…MSVLFGQVVR (289 aa)). The 238-residue stretch at 442-679 (IHFKDVSFSY…GGLYADLIRR (238 aa)) folds into the ABC transporter domain. 477–484 (GQSGGGKS) contributes to the ATP binding site.

This sequence belongs to the ABC transporter superfamily. ABCB family. Multidrug resistance exporter (TC 3.A.1.201) subfamily. As to quaternary structure, component of the mitochondrial potassium channel (mitoK(ATP)).

It is found in the mitochondrion inner membrane. ATP-binding subunit of the mitochondrial ATP-gated potassium channel (mitoK(ATP)). Together with pore-forming subunit CCDC51/MITOK of the mitoK(ATP) channel, mediates ATP-dependent potassium currents across the mitochondrial inner membrane. An increase in ATP intracellular levels closes the channel, inhibiting K(+) transport, whereas a decrease in ATP levels enhances K(+) uptake in the mitochondrial matrix. Plays a role in mitochondrial iron transport. Required for maintenance of normal cardiac function, possibly by influencing mitochondrial iron export and regulating the maturation of cytosolic iron sulfur cluster-containing enzymes. The sequence is that of Mitochondrial potassium channel ATP-binding subunit from Xenopus tropicalis (Western clawed frog).